Consider the following 539-residue polypeptide: Chaperonin GroEL 1 (539 aa).

ATP contacts are provided by residues 29–32 (TLGP), 86–90 (DGTTT), Gly413, 478–480 (NAA), and Asp494.

The protein belongs to the chaperonin (HSP60) family. In terms of assembly, forms a cylinder of 14 subunits composed of two heptameric rings stacked back-to-back. Interacts with the co-chaperonin GroES.

It is found in the cytoplasm. It carries out the reaction ATP + H2O + a folded polypeptide = ADP + phosphate + an unfolded polypeptide.. Its function is as follows. Together with its co-chaperonin GroES, plays an essential role in assisting protein folding. The GroEL-GroES system forms a nano-cage that allows encapsulation of the non-native substrate proteins and provides a physical environment optimized to promote and accelerate protein folding. The polypeptide is Chaperonin GroEL 1 (Corynebacterium diphtheriae (strain ATCC 700971 / NCTC 13129 / Biotype gravis)).